The chain runs to 295 residues: Protease HtpX (295 aa).

A run of 2 helical transmembrane segments spans residues 4–24 and 42–62; these read ILLF…TLSL and QLLI…LFIS. Position 147 (H147) interacts with Zn(2+). E148 is an active-site residue. Position 151 (H151) interacts with Zn(2+). 2 consecutive transmembrane segments (helical) span residues 158-178 and 199-219; these read VTLA…ARII and VATI…VMWF. Position 224 (E224) interacts with Zn(2+).

Belongs to the peptidase M48B family. Zn(2+) serves as cofactor.

Its subcellular location is the cell inner membrane. The protein is Protease HtpX of Pseudomonas fluorescens (strain ATCC BAA-477 / NRRL B-23932 / Pf-5).